A 541-amino-acid polypeptide reads, in one-letter code: Tripeptidyl aminopeptidase (541 aa).

The first 36 residues, 1–36 (MRKSSIRRRATAFGTAGALVTATLIAGAVSAPAASA), serve as a signal peptide directing secretion. Residues 37-39 (APA) constitute a propeptide that is removed on maturation. The region spanning 123 to 501 (GALIYNPGGP…SRLITERDAG (379 aa)) is the AB hydrolase-1 domain. The active-site Nucleophile is the serine 249. Aspartate 474 is a catalytic residue. Residue histidine 503 is the Proton donor of the active site.

Belongs to the peptidase S33 family.

It is found in the secreted. In terms of biological role, cleaves tripeptides from the N-termini of proteins. Does not cleave mono- or dipeptides, or N-terminally blocked peptides. The protein is Tripeptidyl aminopeptidase of Streptomyces coelicolor (strain ATCC BAA-471 / A3(2) / M145).